A 329-amino-acid chain; its full sequence is Porphobilinogen deaminase (329 aa).

Cys-250 is modified (S-(dipyrrolylmethanemethyl)cysteine).

The protein belongs to the HMBS family. In terms of assembly, monomer. The cofactor is dipyrromethane.

It carries out the reaction 4 porphobilinogen + H2O = hydroxymethylbilane + 4 NH4(+). Its pathway is porphyrin-containing compound metabolism; protoporphyrin-IX biosynthesis; coproporphyrinogen-III from 5-aminolevulinate: step 2/4. Tetrapolymerization of the monopyrrole PBG into the hydroxymethylbilane pre-uroporphyrinogen in several discrete steps. The sequence is that of Porphobilinogen deaminase from Burkholderia mallei (strain NCTC 10247).